Consider the following 584-residue polypeptide: DNA mismatch repair protein MutL (584 aa).

It belongs to the DNA mismatch repair MutL/HexB family.

Its function is as follows. This protein is involved in the repair of mismatches in DNA. It is required for dam-dependent methyl-directed DNA mismatch repair. May act as a 'molecular matchmaker', a protein that promotes the formation of a stable complex between two or more DNA-binding proteins in an ATP-dependent manner without itself being part of a final effector complex. The chain is DNA mismatch repair protein MutL from Buchnera aphidicola subsp. Acyrthosiphon pisum (strain 5A).